The sequence spans 586 residues: Potassium-transporting ATPase potassium-binding subunit (586 aa).

12 helical membrane-spanning segments follow: residues 11-31 (LFLV…AKVF), 67-87 (AVAV…ILML), 136-156 (GLAV…IAVI), 179-199 (LYVL…QGVI), 279-299 (VEIF…GVMV), 306-326 (WAIL…LQGV), 351-371 (FGLA…CGAV), 381-401 (LGGM…GGVG), 403-423 (GLYT…LMIG), 442-462 (IITV…AMIT), 507-527 (ILGS…VLAM), and 551-571 (FALW…FPAL).

It belongs to the KdpA family. The system is composed of three essential subunits: KdpA, KdpB and KdpC.

The protein localises to the cell inner membrane. Its function is as follows. Part of the high-affinity ATP-driven potassium transport (or Kdp) system, which catalyzes the hydrolysis of ATP coupled with the electrogenic transport of potassium into the cytoplasm. This subunit binds the periplasmic potassium ions and delivers the ions to the membrane domain of KdpB through an intramembrane tunnel. The protein is Potassium-transporting ATPase potassium-binding subunit of Geobacter metallireducens (strain ATCC 53774 / DSM 7210 / GS-15).